A 185-amino-acid polypeptide reads, in one-letter code: Dioxygenase easH (185 aa).

Fe cation is bound by residues His-17, Asp-19, and His-93.

Belongs to the PhyH family. In terms of assembly, homodimer. The cofactor is Fe cation.

It functions in the pathway alkaloid biosynthesis; ergot alkaloid biosynthesis. Its function is as follows. Dioxygenase; part of the gene cluster that mediates the biosynthesis of fungal ergot alkaloid ergovaline, the predominant ergopeptine product in E.festucae var. lolii. DmaW catalyzes the first step of ergot alkaloid biosynthesis by condensing dimethylallyl diphosphate (DMAP) and tryptophan to form 4-dimethylallyl-L-tryptophan. The second step is catalyzed by the methyltransferase easF that methylates 4-dimethylallyl-L-tryptophan in the presence of S-adenosyl-L-methionine, resulting in the formation of 4-dimethylallyl-L-abrine. The catalase easC and the FAD-dependent oxidoreductase easE then transform 4-dimethylallyl-L-abrine to chanoclavine-I which is further oxidized by easD in the presence of NAD(+), resulting in the formation of chanoclavine-I aldehyde. Agroclavine dehydrogenase easG then mediates the conversion of chanoclavine-I aldehyde to agroclavine via a non-enzymatic adduct reaction: the substrate is an iminium intermediate that is formed spontaneously from chanoclavine-I aldehyde in the presence of glutathione. The presence of easA is not required to complete this reaction. Further conversion of agroclavine to paspalic acid is a two-step process involving oxidation of agroclavine to elymoclavine and of elymoclavine to paspalic acid, the second step being performed by the elymoclavine oxidase cloA. Paspalic acid is then further converted to D-lysergic acid. Ergovaline is assembled from D-lysergic acid and three different amino acids by the D-lysergyl-peptide-synthetase composed of a monomudular (lpsB) and a trimodular (lpsA) nonribosomal peptide synthetase subunit. This Epichloe festucae var. lolii (Neotyphodium lolii) protein is Dioxygenase easH.